Here is a 63-residue protein sequence, read N- to C-terminus: Venom peptide 2a (63 aa).

Residues 1–22 (MRGTSFILFAVVVILGFLNANA) form the signal peptide. AXPX repeat units follow at residues 22–25 (AEPL), 26–29 (ANPA), 32–35 (ANPD), 38–41 (ANPD), and 44–47 (ANPE). A propeptide spanning residues 23-48 (EPLANPAPLANPDPLANPDPLANPEA) is cleaved from the precursor. Position 62 is a leucine amide (L62).

In terms of tissue distribution, expressed by the venom gland.

Its subcellular location is the secreted. It is found in the target cell membrane. In terms of biological role, antimicrobial peptide. Shows activities against Gram-positive bacteria (S.aureus MIC=50 uM and 200 ug/ml, and B.subtilis MIC=200 ug/ml), Gram-negative bacterium E.coli (MIC=100 uM and 200 ug/ml) and fungi (B.cinerea MIC=5 uM, S.cerevisiae MIC=128 ug/ml, S.pombe MIC=128 ug/ml, A.nidulans MIC=128 ug/ml, and C.albicans MIC=64-100 uM). Shows cytolytic activity against insect cell lines. Its hemolytic activity is controversial, as Baek and colleagues report no activity while Bea and colleagues note a hemolytic activity. In vivo, peptide injection in the vicinity of the head and thorax of lepidopteran larvae induces feeding disorder followed by death due to starvation. Is weakly lethal when tested on water flies (D.magna), but is not lethal on lady beetles (H.convergens). This Eumenes pomiformis (Potter wasp) protein is Venom peptide 2a.